We begin with the raw amino-acid sequence, 339 residues long: DNA-directed RNA polymerase subunit alpha (339 aa).

The tract at residues Met-1–Glu-233 is alpha N-terminal domain (alpha-NTD). Residues Gly-266–Leu-339 form an alpha C-terminal domain (alpha-CTD) region.

It belongs to the RNA polymerase alpha chain family. In plastids the minimal PEP RNA polymerase catalytic core is composed of four subunits: alpha, beta, beta', and beta''. When a (nuclear-encoded) sigma factor is associated with the core the holoenzyme is formed, which can initiate transcription.

It is found in the plastid. Its subcellular location is the chloroplast. The catalysed reaction is RNA(n) + a ribonucleoside 5'-triphosphate = RNA(n+1) + diphosphate. DNA-dependent RNA polymerase catalyzes the transcription of DNA into RNA using the four ribonucleoside triphosphates as substrates. The chain is DNA-directed RNA polymerase subunit alpha from Sorghum bicolor (Sorghum).